The primary structure comprises 234 residues: Cytidylate kinase (234 aa).

Position 10–18 (10–18 (GYSACGKST)) interacts with ATP.

It belongs to the cytidylate kinase family. Type 1 subfamily.

Its subcellular location is the cytoplasm. The enzyme catalyses CMP + ATP = CDP + ADP. It catalyses the reaction dCMP + ATP = dCDP + ADP. This chain is Cytidylate kinase, found in Cytophaga hutchinsonii (strain ATCC 33406 / DSM 1761 / CIP 103989 / NBRC 15051 / NCIMB 9469 / D465).